Reading from the N-terminus, the 542-residue chain is Amino-acid acetyltransferase, mitochondrial (542 aa).

Residues 1 to 14 (MLFRRLLTTKVGYH) constitute a mitochondrion transit peptide. Residues 368–534 (AGSAQLPAHK…LREYITYVRD (167 aa)) form the N-acetyltransferase domain.

This sequence belongs to the acetyltransferase family.

The protein resides in the mitochondrion. The enzyme catalyses L-glutamate + acetyl-CoA = N-acetyl-L-glutamate + CoA + H(+). The protein operates within amino-acid biosynthesis; L-arginine biosynthesis; N(2)-acetyl-L-ornithine from L-glutamate: step 1/4. Its function is as follows. N-acetylglutamate synthase involved in arginine biosynthesis. The polypeptide is Amino-acid acetyltransferase, mitochondrial (ARG2) (Eremothecium gossypii (strain ATCC 10895 / CBS 109.51 / FGSC 9923 / NRRL Y-1056) (Yeast)).